The primary structure comprises 327 residues: Methionyl-tRNA formyltransferase (327 aa).

121-124 (SLLP) serves as a coordination point for (6S)-5,6,7,8-tetrahydrofolate.

Belongs to the Fmt family.

The catalysed reaction is L-methionyl-tRNA(fMet) + (6R)-10-formyltetrahydrofolate = N-formyl-L-methionyl-tRNA(fMet) + (6S)-5,6,7,8-tetrahydrofolate + H(+). Its function is as follows. Attaches a formyl group to the free amino group of methionyl-tRNA(fMet). The formyl group appears to play a dual role in the initiator identity of N-formylmethionyl-tRNA by promoting its recognition by IF2 and preventing the misappropriation of this tRNA by the elongation apparatus. This Burkholderia pseudomallei (strain 668) protein is Methionyl-tRNA formyltransferase.